Reading from the N-terminus, the 242-residue chain is uncharacterized protein (242 aa).

Belongs to the MtxX family.

This is an uncharacterized protein from Methanothermobacter thermautotrophicus (strain ATCC 29096 / DSM 1053 / JCM 10044 / NBRC 100330 / Delta H) (Methanobacterium thermoautotrophicum).